Here is a 261-residue protein sequence, read N- to C-terminus: uncharacterized protein (261 aa).

Its subcellular location is the plastid. The protein localises to the chloroplast. This is an uncharacterized protein from Mesostigma viride (Green alga).